The sequence spans 199 residues: MSSMEKHLFNLKFAAKELNRNAKKCEKEEKTEKAKIKKAIQKGNTEIARIHAENAIRQKNQGINFLRMSARVDAVAARVQTAVTMGKVTKSMAGVVKSMDATLKSMNLEKISALMDKFEHQFETLDVQTQQMEDTMSNTTTLTTPQNQVDNLLHEMADEAGLDLSMELPQGQTGSVGTSVASTEQDELSQRLARLRDQV.

Coiled coils occupy residues 8-42 (LFNLKFAAKELNRNAKKCEKEEKTEKAKIKKAIQK) and 178-199 (TSVASTEQDELSQRLARLRDQV). Positions 167-199 (ELPQGQTGSVGTSVASTEQDELSQRLARLRDQV) are disordered. A compositionally biased stretch (polar residues) spans 170–183 (QGQTGSVGTSVAST). The MIT-interacting motif motif lies at 186–196 (DELSQRLARLR).

The protein belongs to the SNF7 family. In terms of assembly, probable peripherally associated component of the endosomal sorting required for transport complex III (ESCRT-III).

The protein resides in the cytoplasm. It is found in the cytosol. It localises to the endosome. The protein localises to the late endosome membrane. Probable peripherally associated component of the endosomal sorting required for transport complex III (ESCRT-III) which is involved in multivesicular bodies (MVBs) formation and sorting of endosomal cargo proteins into MVBs. MVBs contain intraluminal vesicles (ILVs) that are generated by invagination and scission from the limiting membrane of the endosome and mostly are delivered to lysosomes enabling degradation of membrane proteins, such as stimulated growth factor receptors, lysosomal enzymes and lipids. In Xenopus laevis (African clawed frog), this protein is Charged multivesicular body protein 1b (chmp1b).